A 375-amino-acid polypeptide reads, in one-letter code: E3 ubiquitin-protein ligase RHF2A (375 aa).

An RING-type; atypical zinc finger spans residues 33 to 74; that stretch reads CSICLESFCESDPSTLTSCKHEYHLQCILEWCQRSSQCPMCW. The segment covering 146 to 159 has biased composition (basic residues); the sequence is RARHGVRREGHRSR. Disordered regions lie at residues 146–165, 172–262, and 318–375; these read RARH…SQGH, SSQP…SESL, and ERLE…SGSS. Positions 178-188 are enriched in pro residues; sequence SSPPPHPPMPS. Composition is skewed to polar residues over residues 211 to 245 and 327 to 336; these read SHQS…SSPS and RPSTASVSDV. Positions 337 to 365 are enriched in basic and acidic residues; it reads SENHTPETNNEHNRAAAGDEHSVNERGVK.

The enzyme catalyses S-ubiquitinyl-[E2 ubiquitin-conjugating enzyme]-L-cysteine + [acceptor protein]-L-lysine = [E2 ubiquitin-conjugating enzyme]-L-cysteine + N(6)-ubiquitinyl-[acceptor protein]-L-lysine.. Its pathway is protein modification; protein ubiquitination. Its function is as follows. E3 ubiquitin-protein ligase involved in the positive regulation of the gametogenesis progression. Required for the degradation of KRP6, a cyclin-dependent kinase inhibitor which accumulates during meiosis and blocks the progression of subsequent mitoses during gametophytes development. Functions in association with RHF1A. The sequence is that of E3 ubiquitin-protein ligase RHF2A from Arabidopsis thaliana (Mouse-ear cress).